The chain runs to 750 residues: K(+)-insensitive pyrophosphate-energized proton pump (750 aa).

5 consecutive transmembrane segments (helical) span residues 1 to 21 (MYGL…YQGI), 51 to 71 (FIII…GGLN), 78 to 98 (VVFI…VAWF), 133 to 153 (IGML…LFIP), and 161 to 181 (FIGF…AGGI). Residue Lys-184 participates in substrate binding. Residues Asp-187, Asp-191, and Asp-216 each coordinate Mg(2+). 6 helical membrane-spanning segments follow: residues 227-247 (DGFE…LLAI), 257-277 (LVWI…SYWV), 301-321 (LVWL…YMLI), 327-347 (GTMW…GALI), 391-411 (WMGL…TLGL), and 420-440 (VFAF…TIAV). Asp-448 contacts Mg(2+). Transmembrane regions (helical) follow at residues 503 to 523 (VLIG…IMIL), 538 to 558 (ILWP…YWFT), 607 to 627 (GMIN…CLES), and 629 to 649 (LFIG…IFMA). Residues Asp-656, Asp-681, and Asp-685 each contribute to the Ca(2+) site. Substrate is bound at residue Lys-688. 2 helical membrane passes run 694 to 714 (ALNP…ELAI) and 716 to 736 (LPTT…LVFV).

It belongs to the H(+)-translocating pyrophosphatase (TC 3.A.10) family. K(+)-insensitive subfamily. Homodimer. Requires Mg(2+) as cofactor.

Its subcellular location is the cell inner membrane. The enzyme catalyses diphosphate + H2O + H(+)(in) = 2 phosphate + 2 H(+)(out). Its function is as follows. Proton pump that utilizes the energy of pyrophosphate hydrolysis as the driving force for proton movement across the membrane. Generates a proton motive force. The chain is K(+)-insensitive pyrophosphate-energized proton pump from Chlorobaculum tepidum (strain ATCC 49652 / DSM 12025 / NBRC 103806 / TLS) (Chlorobium tepidum).